A 468-amino-acid polypeptide reads, in one-letter code: Bifunctional protein GlmU (468 aa).

The segment at 1-233 is pyrophosphorylase; that stretch reads MAQAGSASPL…LEEANLVNDR (233 aa). UDP-N-acetyl-alpha-D-glucosamine contacts are provided by residues 15–18, Lys-29, Gln-79, and 84–85; these read LAAG and GT. Asp-109 contributes to the Mg(2+) binding site. UDP-N-acetyl-alpha-D-glucosamine-binding residues include Gly-146, Glu-159, Asn-174, and Asn-231. Asn-231 contributes to the Mg(2+) binding site. A linker region spans residues 234 to 254; sequence SQLARAEEILRRRILDAHMKE. Positions 255 to 468 are N-acetyltransferase; the sequence is GVTVRDPVST…GDRRRARTEG (214 aa). The UDP-N-acetyl-alpha-D-glucosamine site is built by Arg-336 and Lys-354. Catalysis depends on His-366, which acts as the Proton acceptor. Residues Tyr-369 and Asn-380 each contribute to the UDP-N-acetyl-alpha-D-glucosamine site. Acetyl-CoA contacts are provided by residues Ala-383, 389–390, and Ala-426; that span reads NY.

It in the N-terminal section; belongs to the N-acetylglucosamine-1-phosphate uridyltransferase family. This sequence in the C-terminal section; belongs to the transferase hexapeptide repeat family. In terms of assembly, homotrimer. It depends on Mg(2+) as a cofactor.

It is found in the cytoplasm. It carries out the reaction alpha-D-glucosamine 1-phosphate + acetyl-CoA = N-acetyl-alpha-D-glucosamine 1-phosphate + CoA + H(+). It catalyses the reaction N-acetyl-alpha-D-glucosamine 1-phosphate + UTP + H(+) = UDP-N-acetyl-alpha-D-glucosamine + diphosphate. It functions in the pathway nucleotide-sugar biosynthesis; UDP-N-acetyl-alpha-D-glucosamine biosynthesis; N-acetyl-alpha-D-glucosamine 1-phosphate from alpha-D-glucosamine 6-phosphate (route II): step 2/2. It participates in nucleotide-sugar biosynthesis; UDP-N-acetyl-alpha-D-glucosamine biosynthesis; UDP-N-acetyl-alpha-D-glucosamine from N-acetyl-alpha-D-glucosamine 1-phosphate: step 1/1. Its pathway is bacterial outer membrane biogenesis; LPS lipid A biosynthesis. Functionally, catalyzes the last two sequential reactions in the de novo biosynthetic pathway for UDP-N-acetylglucosamine (UDP-GlcNAc). The C-terminal domain catalyzes the transfer of acetyl group from acetyl coenzyme A to glucosamine-1-phosphate (GlcN-1-P) to produce N-acetylglucosamine-1-phosphate (GlcNAc-1-P), which is converted into UDP-GlcNAc by the transfer of uridine 5-monophosphate (from uridine 5-triphosphate), a reaction catalyzed by the N-terminal domain. This Rubrobacter xylanophilus (strain DSM 9941 / JCM 11954 / NBRC 16129 / PRD-1) protein is Bifunctional protein GlmU.